The chain runs to 147 residues: MRHYEVVVLIHPDQSEQVPAMVERYTSTVKADGGQVHRFEDWGRRQLAYSINKVHKAHYVLLNVECSDAALEELTTNFRYNDAVLRSLVIREDAAITEESFILKAEKEGRERKARPARAERRDDTEAEDLSDEEGVEAEDFEEEQGV.

A disordered region spans residues 107 to 147 (KEGRERKARPARAERRDDTEAEDLSDEEGVEAEDFEEEQGV). Residues 125 to 147 (TEAEDLSDEEGVEAEDFEEEQGV) show a composition bias toward acidic residues.

This sequence belongs to the bacterial ribosomal protein bS6 family.

In terms of biological role, binds together with bS18 to 16S ribosomal RNA. In Cellvibrio japonicus (strain Ueda107) (Pseudomonas fluorescens subsp. cellulosa), this protein is Small ribosomal subunit protein bS6.